A 701-amino-acid chain; its full sequence is Low-density lipoprotein receptor-related protein 12 (701 aa).

Topologically, residues 1 to 334 (GKSEEPNCAC…ENCPVIVPTR (334 aa)) are extracellular. 2 LDL-receptor class A domains span residues 7–43 (NCAC…EICA) and 56–97 (PCAY…IDCD). Intrachain disulfides connect Cys-8-Cys-20, Cys-15-Cys-33, Cys-27-Cys-42, Cys-57-Cys-74, Cys-64-Cys-87, Cys-81-Cys-96, and Cys-101-Cys-127. One can recognise a CUB domain in the interval 101–214 (CGQWLKYFYG…RGFNATYQVD (114 aa)). N-linked (GlcNAc...) asparagine glycans are attached at residues Asn-126 and Asn-208. LDL-receptor class A domains lie at 216–253 (FCLP…INCT), 254–291 (MCQK…KNCF), and 292–328 (FCQP…ENCP). Disulfide bonds link Cys-217/Cys-230, Cys-224/Cys-243, Cys-237/Cys-252, Cys-255/Cys-268, Cys-262/Cys-281, Cys-275/Cys-290, Cys-293/Cys-305, Cys-300/Cys-318, and Cys-312/Cys-327. Asn-251 carries an N-linked (GlcNAc...) asparagine glycan. N-linked (GlcNAc...) asparagine glycosylation is present at Asn-283. A helical transmembrane segment spans residues 335-355 (VITAAVIGSLICGLLLVIALG). Residues 356–701 (CTCKLYSLRM…TSDDEALLLC (346 aa)) are Cytoplasmic-facing. Disordered stretches follow at residues 465 to 520 (ADGD…LPQK), 535 to 565 (ASSS…SPAR), 590 to 612 (SSVS…REDD), and 643 to 665 (DQGQ…SNRD). Composition is skewed to polar residues over residues 590–599 (SSVSQNQSPL) and 643–656 (DQGQ…SATN).

Belongs to the LDLR family. In terms of assembly, may interact with RACK1, ZFYVE9 and NMRK2.

Its subcellular location is the membrane. The protein localises to the coated pit. Its function is as follows. Probable receptor, which may be involved in the internalization of lipophilic molecules and/or signal transduction. May act as a tumor suppressor. This Macaca fascicularis (Crab-eating macaque) protein is Low-density lipoprotein receptor-related protein 12 (LRP12).